Here is a 111-residue protein sequence, read N- to C-terminus: MTAAQFTNVTVNAQATISYDGRCSSHTIMFEDGRHKTLGVILPCDNLVEHYHFSTNTSERIEITGGECEVKINGEEAFSYYRAGQSFVVEGNSGFNLRTEEIVQYICHLEG.

Belongs to the nucleoside phosphorylase PpnP family.

It catalyses the reaction a purine D-ribonucleoside + phosphate = a purine nucleobase + alpha-D-ribose 1-phosphate. The enzyme catalyses adenosine + phosphate = alpha-D-ribose 1-phosphate + adenine. It carries out the reaction cytidine + phosphate = cytosine + alpha-D-ribose 1-phosphate. The catalysed reaction is guanosine + phosphate = alpha-D-ribose 1-phosphate + guanine. It catalyses the reaction inosine + phosphate = alpha-D-ribose 1-phosphate + hypoxanthine. The enzyme catalyses thymidine + phosphate = 2-deoxy-alpha-D-ribose 1-phosphate + thymine. It carries out the reaction uridine + phosphate = alpha-D-ribose 1-phosphate + uracil. The catalysed reaction is xanthosine + phosphate = alpha-D-ribose 1-phosphate + xanthine. Functionally, catalyzes the phosphorolysis of diverse nucleosides, yielding D-ribose 1-phosphate and the respective free bases. Can use uridine, adenosine, guanosine, cytidine, thymidine, inosine and xanthosine as substrates. Also catalyzes the reverse reactions. The sequence is that of Pyrimidine/purine nucleoside phosphorylase 1 from Psychrobacter arcticus (strain DSM 17307 / VKM B-2377 / 273-4).